The sequence spans 594 residues: Probable acyl-CoA dehydrogenase (594 aa).

Residue E405 is the Proton acceptor of the active site.

The protein belongs to the acyl-CoA dehydrogenase family. It depends on FAD as a cofactor.

The catalysed reaction is a 2,3-saturated acyl-CoA + A = a 2,3-dehydroacyl-CoA + AH2. It participates in lipid metabolism; fatty acid beta-oxidation. Involved in the degradation of long-chain fatty acids. This is Probable acyl-CoA dehydrogenase (fadE) from Bacillus subtilis (strain 168).